We begin with the raw amino-acid sequence, 250 residues long: Probable transcriptional regulatory protein MAP_1030 (250 aa).

The protein belongs to the TACO1 family.

It is found in the cytoplasm. The protein is Probable transcriptional regulatory protein MAP_1030 of Mycolicibacterium paratuberculosis (strain ATCC BAA-968 / K-10) (Mycobacterium paratuberculosis).